A 241-amino-acid chain; its full sequence is ATP synthase subunit a (241 aa).

The next 5 helical transmembrane spans lie at 30-50 (GQVF…VVVG), 91-111 (FIGT…LVPW), 128-148 (INTT…AGLS), 193-213 (LVVA…VMFL), and 214-234 (GLFT…YYIG).

Belongs to the ATPase A chain family. F-type ATPases have 2 components, CF(1) - the catalytic core - and CF(0) - the membrane proton channel. CF(1) has five subunits: alpha(3), beta(3), gamma(1), delta(1), epsilon(1). CF(0) has four main subunits: a, b, b' and c.

It is found in the cellular thylakoid membrane. Key component of the proton channel; it plays a direct role in the translocation of protons across the membrane. In Prochlorococcus marinus (strain MIT 9211), this protein is ATP synthase subunit a.